The sequence spans 267 residues: 4-diphosphocytidyl-2-C-methyl-D-erythritol kinase (267 aa).

Lys8 is a catalytic residue. Position 90–100 (90–100) interacts with ATP; sequence PIGAGLGGGSS. The active site involves Asp132.

This sequence belongs to the GHMP kinase family. IspE subfamily.

The catalysed reaction is 4-CDP-2-C-methyl-D-erythritol + ATP = 4-CDP-2-C-methyl-D-erythritol 2-phosphate + ADP + H(+). It participates in isoprenoid biosynthesis; isopentenyl diphosphate biosynthesis via DXP pathway; isopentenyl diphosphate from 1-deoxy-D-xylulose 5-phosphate: step 3/6. Catalyzes the phosphorylation of the position 2 hydroxy group of 4-diphosphocytidyl-2C-methyl-D-erythritol. This chain is 4-diphosphocytidyl-2-C-methyl-D-erythritol kinase, found in Azobacteroides pseudotrichonymphae genomovar. CFP2.